Reading from the N-terminus, the 272-residue chain is ATP synthase subunit a (272 aa).

5 helical membrane-spanning segments follow: residues 41–61 (TLNIDSMFFSVVLGLLFLVLF), 101–121 (LIAPLALTIFVWVFLMNLMDL), 147–167 (DVNITLSMALGVFILILFYSI), 212–232 (LFGNMYAGELIFILIAGLLPW), and 243–263 (AIFHILIITLQAFIFMVLTIV).

This sequence belongs to the ATPase A chain family. F-type ATPases have 2 components, CF(1) - the catalytic core - and CF(0) - the membrane proton channel. CF(1) has five subunits: alpha(3), beta(3), gamma(1), delta(1), epsilon(1). CF(0) has three main subunits: a(1), b(2) and c(9-12). The alpha and beta chains form an alternating ring which encloses part of the gamma chain. CF(1) is attached to CF(0) by a central stalk formed by the gamma and epsilon chains, while a peripheral stalk is formed by the delta and b chains.

It is found in the cell inner membrane. Key component of the proton channel; it plays a direct role in the translocation of protons across the membrane. The chain is ATP synthase subunit a from Cronobacter sakazakii (strain ATCC BAA-894) (Enterobacter sakazakii).